The chain runs to 357 residues: Methylthioribose-1-phosphate isomerase (357 aa).

Substrate is bound by residues 49–51 (RGA), arginine 89, and glutamine 197. Aspartate 238 (proton donor) is an active-site residue. 248 to 249 (NK) contacts substrate.

Belongs to the eIF-2B alpha/beta/delta subunits family. MtnA subfamily.

It catalyses the reaction 5-(methylsulfanyl)-alpha-D-ribose 1-phosphate = 5-(methylsulfanyl)-D-ribulose 1-phosphate. It functions in the pathway amino-acid biosynthesis; L-methionine biosynthesis via salvage pathway; L-methionine from S-methyl-5-thio-alpha-D-ribose 1-phosphate: step 1/6. In terms of biological role, catalyzes the interconversion of methylthioribose-1-phosphate (MTR-1-P) into methylthioribulose-1-phosphate (MTRu-1-P). The polypeptide is Methylthioribose-1-phosphate isomerase (Leptospira biflexa serovar Patoc (strain Patoc 1 / Ames)).